The chain runs to 257 residues: UPF0246 protein BAV2675 (257 aa).

Belongs to the UPF0246 family.

The protein is UPF0246 protein BAV2675 of Bordetella avium (strain 197N).